Reading from the N-terminus, the 391-residue chain is NAD(P)H-quinone oxidoreductase subunit H, chloroplastic (391 aa).

The protein belongs to the complex I 49 kDa subunit family. In terms of assembly, NDH is composed of at least 16 different subunits, 5 of which are encoded in the nucleus.

It is found in the plastid. It localises to the chloroplast thylakoid membrane. It carries out the reaction a plastoquinone + NADH + (n+1) H(+)(in) = a plastoquinol + NAD(+) + n H(+)(out). The catalysed reaction is a plastoquinone + NADPH + (n+1) H(+)(in) = a plastoquinol + NADP(+) + n H(+)(out). Its function is as follows. NDH shuttles electrons from NAD(P)H:plastoquinone, via FMN and iron-sulfur (Fe-S) centers, to quinones in the photosynthetic chain and possibly in a chloroplast respiratory chain. The immediate electron acceptor for the enzyme in this species is believed to be plastoquinone. Couples the redox reaction to proton translocation, and thus conserves the redox energy in a proton gradient. This chain is NAD(P)H-quinone oxidoreductase subunit H, chloroplastic, found in Chaetosphaeridium globosum (Charophycean green alga).